We begin with the raw amino-acid sequence, 287 residues long: Protease HtpX (287 aa).

A run of 2 helical transmembrane segments spans residues 4 to 24 (IFLL…VMSI) and 33 to 53 (GGLL…SLAI). Position 139 (H139) interacts with Zn(2+). E140 is an active-site residue. Residue H143 coordinates Zn(2+). 2 helical membrane-spanning segments follow: residues 154–174 (LIQG…AGII) and 195–215 (AVVF…VAYF). E220 lines the Zn(2+) pocket.

Belongs to the peptidase M48B family. Requires Zn(2+) as cofactor.

Its subcellular location is the cell inner membrane. The polypeptide is Protease HtpX (Shewanella sp. (strain MR-4)).